We begin with the raw amino-acid sequence, 317 residues long: Ribosomal protein L11 methyltransferase (317 aa).

Residues Thr158, Gly179, Asp201, and Asn244 each contribute to the S-adenosyl-L-methionine site.

The protein belongs to the methyltransferase superfamily. PrmA family.

It localises to the cytoplasm. It carries out the reaction L-lysyl-[protein] + 3 S-adenosyl-L-methionine = N(6),N(6),N(6)-trimethyl-L-lysyl-[protein] + 3 S-adenosyl-L-homocysteine + 3 H(+). Functionally, methylates ribosomal protein L11. This chain is Ribosomal protein L11 methyltransferase, found in Lactococcus lactis subsp. lactis (strain IL1403) (Streptococcus lactis).